Reading from the N-terminus, the 231-residue chain is uncharacterized protein (231 aa).

The next 5 helical transmembrane spans lie at 36–56 (SLLA…SFFI), 58–78 (SQVT…ALQW), 83–103 (APLN…TLTP), 143–163 (FTVM…ASLL), and 170–190 (SIVN…YILY).

It belongs to the BI1 family.

The protein localises to the cell membrane. This is an uncharacterized protein from Campylobacter jejuni subsp. jejuni serotype O:2 (strain ATCC 700819 / NCTC 11168).